Reading from the N-terminus, the 239-residue chain is Ribosomal RNA small subunit methyltransferase G (239 aa).

S-adenosyl-L-methionine is bound by residues Gly79, Phe84, 130–131, and Arg149; that span reads AE.

The protein belongs to the methyltransferase superfamily. RNA methyltransferase RsmG family.

The protein localises to the cytoplasm. In terms of biological role, specifically methylates the N7 position of a guanine in 16S rRNA. In Pelotomaculum thermopropionicum (strain DSM 13744 / JCM 10971 / SI), this protein is Ribosomal RNA small subunit methyltransferase G.